The following is a 261-amino-acid chain: 5'-nucleotidase SurE (261 aa).

4 residues coordinate a divalent metal cation: Asp-8, Asp-9, Ser-43, and Asn-96.

This sequence belongs to the SurE nucleotidase family. The cofactor is a divalent metal cation.

The protein localises to the cytoplasm. It carries out the reaction a ribonucleoside 5'-phosphate + H2O = a ribonucleoside + phosphate. Functionally, nucleotidase that shows phosphatase activity on nucleoside 5'-monophosphates. In Cereibacter sphaeroides (strain ATCC 17023 / DSM 158 / JCM 6121 / CCUG 31486 / LMG 2827 / NBRC 12203 / NCIMB 8253 / ATH 2.4.1.) (Rhodobacter sphaeroides), this protein is 5'-nucleotidase SurE.